We begin with the raw amino-acid sequence, 37 residues long: Esculentin-2B (37 aa).

An intrachain disulfide couples C31 to C37.

In terms of tissue distribution, expressed by the skin glands.

The protein localises to the secreted. Functionally, antibacterial activity against Gram-positive bacterium S.aureus and Gram-negative bacterium E.coli. Has activity against C.albicans. This chain is Esculentin-2B, found in Lithobates berlandieri (Rio Grande leopard frog).